A 130-amino-acid polypeptide reads, in one-letter code: Interferon alpha-inducible protein 27-like protein 2 (130 aa).

The next 3 helical transmembrane spans lie at 8 to 28 (AAVG…AMGF), 43 to 63 (MSAA…VATL), and 66 to 86 (VGAA…GSVL). The segment at 93 to 130 (SPSSSLPAEPEAKEDEARENVPQGEPPKPPLKSEKHEE) is disordered.

It belongs to the IFI6/IFI27 family.

The protein resides in the mitochondrion membrane. In terms of biological role, plays a role in the apoptotic process and has a pro-apoptotic activity. This is Interferon alpha-inducible protein 27-like protein 2 from Homo sapiens (Human).